A 906-amino-acid polypeptide reads, in one-letter code: Coatomer subunit beta' (906 aa).

WD repeat units follow at residues 13 to 52, 55 to 94, 97 to 136, 140 to 180, 183 to 224, 227 to 266, 350 to 388, and 390 to 425; these read ARSD…LVKT, VCDL…RVHM, AHSD…SCSQ, GHTH…PNFT, GHEK…CVQT, GHAQ…LEST, SCEI…NKSF, and SAQE…KSFK. The residue at position 627 (lysine 627) is an N6-acetyllysine. Residues 746 to 783 form a WD 9 repeat; that stretch reads IRTGRLPEAAFLARTYLPSQVSRVVKLWRENLSKVNQK. Positions 837–862 are disordered; that stretch reads EEAKGFQPSRSTAQQELDGKPASPTP. A Phosphoserine modification is found at serine 859. A Phosphothreonine modification is found at threonine 861. Positions 866–890 form a coiled coil; that stretch reads ASHTANKEEKSLLELEVDLDNLELE.

This sequence belongs to the WD repeat COPB2 family. As to quaternary structure, oligomeric complex that consists of at least the alpha, beta, beta', gamma, delta, epsilon and zeta subunits. Probably interacts with PEX11A. Interacts with SCYL1. Interacts with JAGN1.

It is found in the cytoplasm. The protein resides in the cytosol. The protein localises to the golgi apparatus membrane. It localises to the cytoplasmic vesicle. Its subcellular location is the COPI-coated vesicle membrane. The coatomer is a cytosolic protein complex that binds to dilysine motifs and reversibly associates with Golgi non-clathrin-coated vesicles, which further mediate biosynthetic protein transport from the ER, via the Golgi up to the trans Golgi network. Coatomer complex is required for budding from Golgi membranes, and is essential for the retrograde Golgi-to-ER transport of dilysine-tagged proteins. In mammals, the coatomer can only be recruited by membranes associated to ADP-ribosylation factors (ARFs), which are small GTP-binding proteins; the complex also influences the Golgi structural integrity, as well as the processing, activity, and endocytic recycling of LDL receptors. Functionally, this coatomer complex protein, essential for Golgi budding and vesicular trafficking, is a selective binding protein (RACK) for protein kinase C, epsilon type. It binds to Golgi membranes in a GTP-dependent manner. This chain is Coatomer subunit beta' (COPB2), found in Macaca fascicularis (Crab-eating macaque).